The following is a 156-amino-acid chain: Small ribosomal subunit protein uS7 (156 aa).

Belongs to the universal ribosomal protein uS7 family. Part of the 30S ribosomal subunit. Contacts proteins S9 and S11.

One of the primary rRNA binding proteins, it binds directly to 16S rRNA where it nucleates assembly of the head domain of the 30S subunit. Is located at the subunit interface close to the decoding center, probably blocks exit of the E-site tRNA. The polypeptide is Small ribosomal subunit protein uS7 (Chlorobaculum parvum (strain DSM 263 / NCIMB 8327) (Chlorobium vibrioforme subsp. thiosulfatophilum)).